Here is a 719-residue protein sequence, read N- to C-terminus: Protein psiI (719 aa).

A signal peptide spans 1 to 19 (MKIIFNLLILFSLVNFINS). The Extracellular portion of the chain corresponds to 20 to 658 (QSTTQATTLK…ICQTGAIVST (639 aa)). Residues Asn62, Asn105, Asn118, Asn151, Asn315, Asn379, Asn454, Asn488, Asn500, Asn538, Asn592, and Asn629 are each glycosylated (N-linked (GlcNAc...) asparagine). A PA14 domain is found at 119–261 (LTLNPSTGTY…YDYCGVCYGD (143 aa)). A helical transmembrane segment spans residues 659-679 (AVVASVVVVGAVVLGAAIFAG). Over 680–719 (KKGYDHWKANQGQVFASSNANPLYQQSNNGGENALFEAPQ) the chain is Cytoplasmic.

This sequence belongs to the prespore-cell-inducing factor family.

The protein resides in the membrane. This Dictyostelium discoideum (Social amoeba) protein is Protein psiI (psiI).